The sequence spans 1398 residues: DNA-directed RNA polymerase subunit beta' (1398 aa).

Zn(2+) contacts are provided by Cys71, Cys73, Cys86, and Cys89. Residues Asp462, Asp464, and Asp466 each coordinate Mg(2+). 4 residues coordinate Zn(2+): Cys810, Cys884, Cys891, and Cys894.

This sequence belongs to the RNA polymerase beta' chain family. The RNAP catalytic core consists of 2 alpha, 1 beta, 1 beta' and 1 omega subunit. When a sigma factor is associated with the core the holoenzyme is formed, which can initiate transcription. Mg(2+) serves as cofactor. Requires Zn(2+) as cofactor.

It carries out the reaction RNA(n) + a ribonucleoside 5'-triphosphate = RNA(n+1) + diphosphate. Its function is as follows. DNA-dependent RNA polymerase catalyzes the transcription of DNA into RNA using the four ribonucleoside triphosphates as substrates. The chain is DNA-directed RNA polymerase subunit beta' from Mesorhizobium japonicum (strain LMG 29417 / CECT 9101 / MAFF 303099) (Mesorhizobium loti (strain MAFF 303099)).